A 94-amino-acid polypeptide reads, in one-letter code: Conotoxin Cal22a (94 aa).

The N-terminal stretch at 1–24 (MMSTKGITLFLCLLLLALATSVNG) is a signal peptide. A propeptide spanning residues 25–44 (GQGTRRSRMTRALHGGRPSA) is cleaved from the precursor.

Contains 4 disulfide bonds. Expressed by the venom duct.

It localises to the secreted. Its function is as follows. Probable neurotoxin with unknown target. Possibly targets ion channels. The chain is Conotoxin Cal22a from Californiconus californicus (California cone).